We begin with the raw amino-acid sequence, 296 residues long: Acetylglutamate kinase (296 aa).

Substrate contacts are provided by residues 71–72 (GG), Arg-93, and Asn-186.

The protein belongs to the acetylglutamate kinase family. ArgB subfamily.

It is found in the cytoplasm. It catalyses the reaction N-acetyl-L-glutamate + ATP = N-acetyl-L-glutamyl 5-phosphate + ADP. It functions in the pathway amino-acid biosynthesis; L-arginine biosynthesis; N(2)-acetyl-L-ornithine from L-glutamate: step 2/4. Functionally, catalyzes the ATP-dependent phosphorylation of N-acetyl-L-glutamate. In Synechococcus sp. (strain RCC307), this protein is Acetylglutamate kinase.